The chain runs to 890 residues: MAFAWWPCLILALLSSLAASGFPRSPFRLLGKRSLPEGVANGIEVYSTKINSKVTSRFAHNVVTMRAVNRADTAKEVSFDVELPKTAFITNFTLTIDGVTYPGNVKEKEVAKKQYEKAVSQGKTAGLVKASGRKLEKFTVSVNVAAGSKVTFELTYEELLKRHKGKYEMYLKVQPKQLVKHFEIEVDIFEPQGISMLDAEASFITNDLLGSALTKSFSGKKGHVSFKPSLDQQRSCPTCTDSLLNGDFTITYDVNRESPGNVQIVNGYFVHFFAPQGLPVVPKNVAFVIDISGSMAGRKLEQTKEALLRILEDMQEEDYLNFILFSGDVSTWKEHLVQATPENLQEARTFVKSMEDKGMTNINDGLLRGISMLNKAREEHRIPERSTSIVIMLTDGDANVGESRPEKIQENVRNAIGGKFPLYNLGFGNNLNYNFLENMALENHGFARRIYEDSDADLQLQGFYEEVANPLLTGVEMEYPENAILDLTQNTYQHFYDGSEIVVAGRLVDEDMNSFKADVKGHGATNDLTFTEEVDMKEMEKALQERDYIFGNYIERLWAYLTIEQLLEKRKNAHGEEKENLTARALDLSLKYHFVTPLTSMVVTKPEDNEDERAIADKPGEDAEATPVSPAMSYLTSYQPPQNPYYYVDGDPHFIIQIPEKDDALCFNIDEAPGTVLRLIQDAVTGLTVNGQITGDKRGSPDSKTRKTYFGKLGIANAQMDFQVEVTTEKITLWNRAVPSTFSWLDTVTVTQDGLSMMINRKNMVVSFGDGVTFVVVLHQVWKKHPVHRDFLGFYVVDSHRMSAQTHGLLGQFFQPFDFKVSDIRPGSDPTKPDATLVVKNHQLIVTRGSQKDYRKDASIGTKVVCWFVHNNGEGLIDGVHTDYIVPNLF.

The N-terminal stretch at 1-20 is a signal peptide; that stretch reads MAFAWWPCLILALLSSLAAS. The propeptide occupies 21 to 34; sequence GFPRSPFRLLGKRS. A VIT domain is found at 29 to 158; sequence LLGKRSLPEG…KVTFELTYEE (130 aa). N91 is a glycosylation site (N-linked (GlcNAc...) asparagine). In terms of domain architecture, VWFA spans 284–467; sequence NVAFVIDISG…LQLQGFYEEV (184 aa). N-linked (GlcNAc...) asparagine glycosylation occurs at N580. D651 carries the post-translational modification Aspartate 1-(chondroitin 4-sulfate)-ester. The propeptide occupies 652–890; the sequence is PHFIIQIPEK…HTDYIVPNLF (239 aa).

The protein belongs to the ITIH family. As to quaternary structure, I-alpha-I plasma protease inhibitors are assembled from one or two heavy chains (HC) and one light chain, bikunin. Pre-alpha-inhibitor (P-alpha-I) is composed of ITIH3/HC3 and bikunin. Heavy chains are linked to bikunin via chondroitin 4-sulfate esterified to the alpha-carboxyl of the C-terminal aspartate after propeptide cleavage.

The protein resides in the secreted. May act as a carrier of hyaluronan in serum or as a binding protein between hyaluronan and other matrix protein, including those on cell surfaces in tissues to regulate the localization, synthesis and degradation of hyaluronan which are essential to cells undergoing biological processes. This Homo sapiens (Human) protein is Inter-alpha-trypsin inhibitor heavy chain H3 (ITIH3).